A 438-amino-acid polypeptide reads, in one-letter code: MAPKKRNGFMTFVKEWQANNPVARGLSNSEAVAKCDPIWKSMGDQERGPYNSMAKNANVLERTAKKERLNCLGGSVAEMEIEKNEAISAELQMKRKIERIILTAKNSMELENEDFVFVSFNYFTKALTGDIYVPAEFSACRYSLKGGISSNYSTMINPGHIIYGQSRDAQDHSKTTHKLPLPPQAFGETNMGKLYIDIFNWLSVRNEEKLDQDPVIVYTTPELMPVVKSCFRYLASEAEIDEDERKIMVFDIHHLFYTLKKSVLDVAGVTNDRINFHVTNNFFVKDFFEYTEGISCDYHEKIDRSKYCTNSMVKRWGFTFSDYMCADLAIPLQPGKHIPLKVKPNYTITPASSSTNFDEISLDSYYSAPPRIQKEMGSRDLSPSSSHQSVSRAYVPRDHSVYGGTLDSDEEFPSLGGRRRQLPDKSHFNMGAGKKIAR.

Residues 2 to 69 (APKKRNGFMT…LERTAKKERL (68 aa)) constitute a DNA-binding region (HMG box). The disordered stretch occupies residues 374-438 (KEMGSRDLSP…NMGAGKKIAR (65 aa)). The span at 381 to 391 (LSPSSSHQSVS) shows a compositional bias: polar residues.

Belongs to the maelstrom family.

Its subcellular location is the cytoplasm. The protein localises to the nucleus. Involved both in the piRNA and miRNA metabolic processes. As a component of the meiotic nuage, plays a central role during oogenesis by repressing transposable elements and preventing their mobilization, which is essential for the germline integrity. Repression of transposable elements is mediated via the piRNA metabolic process, which mediates the repression of transposable elements during meiosis by forming complexes composed of piRNAs and Piwi proteins and governs the repression of transposons. As a nuclear component, it is required for proper differentiation in the germline stem cell (GSC) lineage by repressing microRNA-7 (miR-7), thereby acting as an indirect regulator of bag-of-marbles (Bam). Acts by binding to the promoter of miR-7 gene and repressing its expression; miR-7 repression alleviates the Bam repression by miR-7, thereby allowing differentiation in the germline stem cell (GSC) lineage. The sequence is that of Protein maelstrom 1 (mael1) from Drosophila persimilis (Fruit fly).